The chain runs to 84 residues: Hepcidin (84 aa).

A signal peptide spans 1–24 (MALSSQIWAACLLLLLLLASLTSG). Positions 25–54 (SVFPQQTGQLAELQPQDRAGARAGWTPMLQ) are excised as a propeptide. 3 disulfides stabilise this stretch: C69–C72, C70–C78, and C73–C81.

It belongs to the hepcidin family. Interacts with SLC40A1; this interaction promotes SLC40A1 rapid ubiquitination.

The protein localises to the secreted. Functionally, liver-produced hormone that constitutes the main circulating regulator of iron absorption and distribution across tissues. Acts by promoting endocytosis and degradation of ferroportin/SLC40A1, leading to the retention of iron in iron-exporting cells and decreased flow of iron into plasma. Controls the major flows of iron into plasma: absorption of dietary iron in the intestine, recycling of iron by macrophages, which phagocytose old erythrocytes and other cells, and mobilization of stored iron from hepatocytes. Has strong antimicrobial activity against E.coli ML35P N.cinerea and weaker against S.epidermidis, S.aureus and group b streptococcus bacteria. Active against the fungus C.albicans. No activity against P.aeruginosa. This is Hepcidin (HAMP) from Pongo abelii (Sumatran orangutan).